Reading from the N-terminus, the 231-residue chain is Large ribosomal subunit protein uL1 (231 aa).

The protein belongs to the universal ribosomal protein uL1 family. As to quaternary structure, part of the 50S ribosomal subunit.

Binds directly to 23S rRNA. The L1 stalk is quite mobile in the ribosome, and is involved in E site tRNA release. Functionally, protein L1 is also a translational repressor protein, it controls the translation of the L11 operon by binding to its mRNA. The sequence is that of Large ribosomal subunit protein uL1 from Kosmotoga olearia (strain ATCC BAA-1733 / DSM 21960 / TBF 19.5.1).